Reading from the N-terminus, the 221-residue chain is Probable serine protease inhibitor 6 (221 aa).

The N-terminal stretch at 1 to 22 (MKCLFLLCLCLFPIVVFSSTFT) is a signal peptide. Positions 23–28 (SQNPIN) are excised as a propeptide. A Vacuolar targeting signal motif is present at residues 25–30 (NPINLP). 2 disulfide bridges follow: Cys-76–Cys-125 and Cys-174–Cys-191.

This sequence belongs to the protease inhibitor I3 (leguminous Kunitz-type inhibitor) family.

Its subcellular location is the vacuole. Its function is as follows. Inhibitor of trypsin (serine protease). May protect the plant by inhibiting proteases of invading organisms. This is Probable serine protease inhibitor 6 from Solanum tuberosum (Potato).